The following is a 338-amino-acid chain: Biotin synthase (338 aa).

A Radical SAM core domain is found at 63-290; it reads NGVQLSTLLS…RAKVRLSAGR (228 aa). Residues C78, C82, and C85 each coordinate [4Fe-4S] cluster. Residues C122, C153, C213, and R285 each coordinate [2Fe-2S] cluster.

This sequence belongs to the radical SAM superfamily. Biotin synthase family. As to quaternary structure, homodimer. [4Fe-4S] cluster serves as cofactor. [2Fe-2S] cluster is required as a cofactor.

It catalyses the reaction (4R,5S)-dethiobiotin + (sulfur carrier)-SH + 2 reduced [2Fe-2S]-[ferredoxin] + 2 S-adenosyl-L-methionine = (sulfur carrier)-H + biotin + 2 5'-deoxyadenosine + 2 L-methionine + 2 oxidized [2Fe-2S]-[ferredoxin]. The protein operates within cofactor biosynthesis; biotin biosynthesis; biotin from 7,8-diaminononanoate: step 2/2. Functionally, catalyzes the conversion of dethiobiotin (DTB) to biotin by the insertion of a sulfur atom into dethiobiotin via a radical-based mechanism. The sequence is that of Biotin synthase from Nitrosomonas eutropha (strain DSM 101675 / C91 / Nm57).